A 181-amino-acid polypeptide reads, in one-letter code: Large ribosomal subunit protein uL10 (181 aa).

The protein belongs to the universal ribosomal protein uL10 family. As to quaternary structure, part of the ribosomal stalk of the 50S ribosomal subunit. The N-terminus interacts with L11 and the large rRNA to form the base of the stalk. The C-terminus forms an elongated spine to which L12 dimers bind in a sequential fashion forming a multimeric L10(L12)X complex.

Functionally, forms part of the ribosomal stalk, playing a central role in the interaction of the ribosome with GTP-bound translation factors. The chain is Large ribosomal subunit protein uL10 from Fervidobacterium nodosum (strain ATCC 35602 / DSM 5306 / Rt17-B1).